Reading from the N-terminus, the 315-residue chain is MNQLNTAIVEKEVIDPMAFRRALGNFATGVTIMTAQTSSGERVGVTANSFNSVSLDPALVLWSIDKKSSSYRIFEEATHFGVNILSAAQIELSNRFARRSEDKFANIEFDLGVGNIPLFKNCSAAFECERYNIVEGGDHWIIIGRVVKFHDHGRSPLLYHQGAYSAVLPHPSLNMKSETAEGVFPGRLYDNMYYLLTQAVRAYQNDYQPKQLASGFRTSEARLLLVLESKTASSKCDLQREVAMPIREIEEATKILSEKGLLIDNGQHYELTEQGNACAHMLYKIAESHQEEVFAKYTVDERKLFKNMLKDLIGI.

Belongs to the non-flavoprotein flavin reductase family. In terms of assembly, homodimer. The p-hydroxyphenylacetate 3-hydroxylase (HpaH) is composed of an oxygenase component C2 and a reductase component C1.

The enzyme catalyses a reduced flavin + NAD(+) = an oxidized flavin + NADH + 2 H(+). Its pathway is aromatic compound metabolism; 4-hydroxyphenylacetate degradation; pyruvate and succinate semialdehyde from 4-hydroxyphenylacetate: step 1/7. With respect to regulation, flavin concentrations greater than 15 uM do not inhibit the NADH oxidation activity of the reductase component C1 but do affect the hydroxylation activity of the C1-C2 complex. Maximal reductase activity is achieved only upon HPA binding to the reductase component C1 before interaction with NADH. HPA stimulates the rates of both the reduction of FMN and release of reduced FMN from the reductase component. Reductase component of a two-component system that supplies reduced FMN (FMNH2) to the oxygenase component to catalyze the hydroxylation of 4-hydroxyphenylacetic acid, leading to the production of 3,4-dihydroxyphenylacetate (3,4-DHPA). Catalyzes the reduction of free flavins (FMN, FAD and riboflavin) by NADH. Subsequently, the reduced flavins diffuse to the oxygenase component C2. The chain is p-hydroxyphenylacetate 3-hydroxylase, reductase component from Acinetobacter baumannii.